Consider the following 419-residue polypeptide: UPF0329 protein ECU07_1890/ECU10_0010 (419 aa).

Residues 136 to 165 (RQRKREEETERSVKELVGDEEKAKSKEEKA) show a composition bias toward basic and acidic residues. A disordered region spans residues 136–222 (RQRKREEETE…KGGKKKSKGG (87 aa)). The segment covering 213 to 222 (KGGKKKSKGG) has biased composition (basic residues).

The protein belongs to the UPF0329 family.

This chain is UPF0329 protein ECU07_1890/ECU10_0010, found in Encephalitozoon cuniculi (strain GB-M1) (Microsporidian parasite).